Reading from the N-terminus, the 224-residue chain is Ras-related protein RABA4b (224 aa).

A2 is subject to N-acetylalanine. GTP is bound at residue 24–31; it reads GDSAVGKS. An Effector region motif is present at residues 46-54; it reads SKATIGVEF. Residues 72–76, 130–133, and 160–161 contribute to the GTP site; these read DTAGQ, NKSD, and SA. 2 S-geranylgeranyl cysteine lipidation sites follow: C220 and C221.

It belongs to the small GTPase superfamily. Rab family. As to quaternary structure, interacts with TCTP1. As to expression, expressed in roots, stems, leaves and flowers. Expressed in tips of growing root hair cells.

The protein resides in the early endosome membrane. It is found in the golgi apparatus. The protein localises to the trans-Golgi network membrane. Its function is as follows. Regulator of membrane trafficking. May be required for secretion of cell wall components in cells. This Arabidopsis thaliana (Mouse-ear cress) protein is Ras-related protein RABA4b.